Consider the following 335-residue polypeptide: Arylacetonitrilase (335 aa).

The region spanning 6–291 (LKVAITQAQP…EGIVYADLDM (286 aa)) is the CN hydrolase domain. Catalysis depends on Glu46, which acts as the Proton acceptor. Lys127 is a catalytic residue. Cys168 acts as the Nucleophile in catalysis.

Belongs to the carbon-nitrogen hydrolase superfamily. Nitrilase family.

It carries out the reaction a nitrile + 2 H2O = a carboxylate + NH4(+). It catalyses the reaction 4-chlorophenylacetonitrile + 2 H2O = 4-chlorophenylacetate + NH4(+). Its function is as follows. Nitrilase that hydrolyzes preferentially phenylacetonitrile, (R,S)-mandelonitrile, and 3-indolylacetonitrile. This Arthroderma benhamiae (strain ATCC MYA-4681 / CBS 112371) (Trichophyton mentagrophytes) protein is Arylacetonitrilase.